The primary structure comprises 230 residues: Ribonuclease 3 (230 aa).

The 134-residue stretch at 1-134 (MKQLEELLST…FLGALLLDKG (134 aa)) folds into the RNase III domain. Residue Glu47 coordinates Mg(2+). The active site involves Asp51. 2 residues coordinate Mg(2+): Asp120 and Glu123. Glu123 is a catalytic residue. The region spanning 160–229 (DYKTCLQEFL…AKNALAQLSE (70 aa)) is the DRBM domain.

It belongs to the ribonuclease III family. Homodimer. It depends on Mg(2+) as a cofactor.

It is found in the cytoplasm. The catalysed reaction is Endonucleolytic cleavage to 5'-phosphomonoester.. Digests double-stranded RNA. Involved in the processing of primary rRNA transcript to yield the immediate precursors to the large and small rRNAs (23S and 16S). Processes some mRNAs, and tRNAs when they are encoded in the rRNA operon. Processes pre-crRNA and tracrRNA of type II CRISPR loci if present in the organism. The sequence is that of Ribonuclease 3 from Streptococcus pyogenes serotype M2 (strain MGAS10270).